Here is a 465-residue protein sequence, read N- to C-terminus: MNSSNSNDHENLSAQEFIISDIEEDPDTNYEPPVNDSESENYKDNSDHSNHSSHQNKFYYQNFPENFSKDFSESFNDNQNLKNFNTTDNNFNDDYNNDYDSNNDSNNDSNNDSNNDYDNESNNYFNNDSNNDSNNDSDIEETTKHKLPIERKKRGPPKSIVEGQKKYIEMMERQNRMIKKDKNKSLKQMDAVKLPTSNAKPGPETRRVIIGGKIKYIPIKTTDNQSNTESSQENNVIKKEPNNKLDKQPQKISSNIKDIVPKQETDKKSPVKSIKELSVNEPDDIDSIDQSNKLGKSYNTNNNNSKPIEKQRVPPSLVKKMEVYNSKLAKEMNNINRKKNISGKNVPSKYAKHIEDDVRKQTVRNVKSFSDLRRVKALQDITPDSGVDVNKASIAELKKMRLEQRKREIEEKRRQVENKKPDSAVQAILNNNDLSKFAKMVAIKNLSVNSRHRKMKTGNNVLNKE.

3 disordered regions span residues 1-55 (MNSS…SSHQ), 70-164 (DFSE…VEGQ), and 221-313 (TTDN…KQRV). Residues 40 to 50 (ENYKDNSDHSN) show a composition bias toward basic and acidic residues. The segment covering 73 to 82 (ESFNDNQNLK) has biased composition (polar residues). Residues 83–134 (NFNTTDNNFNDDYNNDYDSNNDSNNDSNNDSNNDYDNESNNYFNNDSNNDSN) show a composition bias toward low complexity. Basic and acidic residues predominate over residues 141-150 (ETTKHKLPIE). Residues 221 to 235 (TTDNQSNTESSQENN) are compositionally biased toward low complexity. Composition is skewed to basic and acidic residues over residues 236–249 (VIKKEPNNKLDKQP) and 259–275 (IVPKQETDKKSPVKSIK). The segment covering 288 to 306 (IDQSNKLGKSYNTNNNNSK) has biased composition (polar residues). Positions 390-423 (NKASIAELKKMRLEQRKREIEEKRRQVENKKPDS) form a coiled coil.

This is an uncharacterized protein from Acanthamoeba polyphaga mimivirus (APMV).